We begin with the raw amino-acid sequence, 470 residues long: 1-aminocyclopropane-1-carboxylate synthase 9 (470 aa).

Substrate contacts are provided by Glu47 and Tyr85. Lys272 is modified (N6-(pyridoxal phosphate)lysine).

It belongs to the class-I pyridoxal-phosphate-dependent aminotransferase family. Homodimer and heterodimer. In vivo, the relevance of heterodimerization with other ACS enzymes is however unsure. Interacts (via its C-terminal region) with FEI1, FEI2, ETO1 and EOL1. Requires pyridoxal 5'-phosphate as cofactor. Post-translationally, may be processed at its C-terminus. Expressed in roots and siliques.

The catalysed reaction is S-adenosyl-L-methionine = 1-aminocyclopropane-1-carboxylate + S-methyl-5'-thioadenosine + H(+). The protein operates within alkene biosynthesis; ethylene biosynthesis via S-adenosyl-L-methionine; ethylene from S-adenosyl-L-methionine: step 1/2. Its function is as follows. 1-aminocyclopropane-1-carboxylate synthase (ACS) enzymes catalyze the conversion of S-adenosyl-L-methionine (SAM) into 1-aminocyclopropane-1-carboxylate (ACC), a direct precursor of ethylene. This Arabidopsis thaliana (Mouse-ear cress) protein is 1-aminocyclopropane-1-carboxylate synthase 9 (ACS9).